The sequence spans 873 residues: Potassium voltage-gated channel subfamily KQT member 3 (873 aa).

The tract at residues Met1–Glu41 is disordered. Over Met1 to Gly121 the chain is Cytoplasmic. Residues Ala11–Ala26 are compositionally biased toward gly residues. Position 82 is a phosphothreonine (Thr82). A helical transmembrane segment spans residues Trp122–Thr144. Over Thr145–Gly154 the chain is Extracellular. A helical membrane pass occupies residues Asp155–Ile176. At Trp177–Phe194 the chain is on the cytoplasmic side. The helical transmembrane segment at Ala195–Val214 threads the bilayer. Over Ala215–Ser226 the chain is Extracellular. A helical; Voltage-sensor transmembrane segment spans residues Leu227–Gly245. Arg244 is a binding site for a 1,2-diacyl-sn-glycero-3-phospho-(1D-myo-inositol-4,5-bisphosphate). At Gly246–Ala257 the chain is on the cytoplasmic side. The chain crosses the membrane as a helical span at residues His258 to Val283. Lys260 contacts a 1,2-diacyl-sn-glycero-3-phospho-(1D-myo-inositol-4,5-bisphosphate). Over Glu284–Thr303 the chain is Extracellular. The segment at residues Tyr304–Ala316 is an intramembrane region (pore-forming). The short motif at Thr317–Asp322 is the Selectivity filter element. At Thr317–Thr327 the chain is on the extracellular side. A helical membrane pass occupies residues Trp328–Ser354. Residues Gly355–Thr873 lie on the Cytoplasmic side of the membrane. A mediates interaction with calmodulin region spans residues Ala357 to Thr538. Lys367 is an a 1,2-diacyl-sn-glycero-3-phospho-(1D-myo-inositol-4,5-bisphosphate) binding site. Disordered regions lie at residues Pro575–Glu603, Arg723–Tyr742, and Glu766–Thr873. 3 stretches are compositionally biased toward polar residues: residues Lys588–Arg601, Gly725–Thr741, and Asp844–Thr873.

The protein belongs to the potassium channel family. KQT (TC 1.A.1.15) subfamily. Kv7.3/KCNQ3 sub-subfamily. In terms of assembly, heterotetramer with KCNQ2; forms heterotetrameric native M-channel responsible for the M-current. Interacts with calmodulin; the interaction is calcium-independent, constitutive and participates in the proper assembly of a functional M-channel. Heteromultimer with KCNQ5. May associate with KCNE2. Interacts with IQCJ-SCHIP1. Interacts (via the pore module) with SLC5A3/SMIT1; forms a coregulatory complex that alters ion selectivity, voltage dependence and gating kinetics of the channel. In terms of processing, KCNQ2/KCNQ3 are ubiquitinated by NEDD4L. Ubiquitination leads to protein degradation. Degradation induced by NEDD4L is inhibited by USP36. As to expression, expressed in dorsal root ganglion (DRG) neurons.

Its subcellular location is the cell membrane. It carries out the reaction K(+)(in) = K(+)(out). The enzyme catalyses Rb(+)(in) = Rb(+)(out). The catalysed reaction is Cs(+)(in) = Cs(+)(out). It catalyses the reaction Na(+)(in) = Na(+)(out). Phosphatidylinositol-4,5-bisphosphate (PIP2) potentiates the activation of KCNQ channels by enhancing the electro-mechanical coupling of the voltage-sensing domain (VSD) and the pore-forming domain (PD). In the closed state of the channel, PIP2 is anchored at the S2-S3 loop; upon channel activation, PIP2 interacts with the S4-S5 linker and is involved in channel gating. Calcium suppresses KCNQ2-KCNQ3 channel currents, with calcium-bound calmodulin inducing a change in channel configuration which leads to the reduction of channel affinity for PIP2 and subsequent current suppression. Functionally, pore-forming subunit of the voltage-gated potassium (Kv) M-channel which is responsible for the M-current, a key controller of neuronal excitability. M-channel is composed of pore-forming subunits KCNQ2 and KCNQ3 assembled as heterotetramers. The native M-current has a slowly activating and deactivating potassium conductance which plays a critical role in determining the subthreshold electrical excitability of neurons as well as the responsiveness to synaptic inputs. M-channel is selectively permeable in vitro to other cations besides potassium, in decreasing order of affinity K(+) &gt; Rb(+) &gt; Cs(+) &gt; Na(+). M-channel association with SLC5A3/SMIT1 alters channel ion selectivity, increasing Na(+) and Cs(+) permeation relative to K(+). Suppressed by activation of M1 muscarinic acetylcholine receptors. KCNQ3 also associates with KCNQ5 to form a functional channel in vitro and may also contribute to the M-current in brain. This is Potassium voltage-gated channel subfamily KQT member 3 from Mus musculus (Mouse).